Consider the following 424-residue polypeptide: Glutamate-1-semialdehyde 2,1-aminomutase (424 aa).

Lysine 266 carries the N6-(pyridoxal phosphate)lysine modification.

It belongs to the class-III pyridoxal-phosphate-dependent aminotransferase family. HemL subfamily. Homodimer. Pyridoxal 5'-phosphate serves as cofactor.

It localises to the cytoplasm. The enzyme catalyses (S)-4-amino-5-oxopentanoate = 5-aminolevulinate. It functions in the pathway porphyrin-containing compound metabolism; protoporphyrin-IX biosynthesis; 5-aminolevulinate from L-glutamyl-tRNA(Glu): step 2/2. The protein is Glutamate-1-semialdehyde 2,1-aminomutase of Thermus thermophilus (strain ATCC 27634 / DSM 579 / HB8).